A 150-amino-acid chain; its full sequence is Catabolic 3-dehydroquinase 2 (150 aa).

The Proton acceptor role is filled by tyrosine 23. Substrate-binding residues include asparagine 74, histidine 80, and aspartate 87. Histidine 100 serves as the catalytic Proton donor. Substrate-binding positions include 101 to 102 (IT) and arginine 111.

The protein belongs to the type-II 3-dehydroquinase family. In terms of assembly, homododecamer. Adopts a ring-like structure, composed of an arrangement of two hexameric rings stacked on top of one another.

The enzyme catalyses 3-dehydroquinate = 3-dehydroshikimate + H2O. The protein operates within aromatic compound metabolism; 3,4-dihydroxybenzoate biosynthesis; 3,4-dihydroxybenzoate from 3-dehydroquinate: step 1/2. In terms of biological role, is involved in the catabolism of quinate. Allows the utilization of quinate as carbon source via the beta-ketoadipate pathway. The sequence is that of Catabolic 3-dehydroquinase 2 from Aspergillus fumigatus (strain ATCC MYA-4609 / CBS 101355 / FGSC A1100 / Af293) (Neosartorya fumigata).